We begin with the raw amino-acid sequence, 379 residues long: Glutamate 5-kinase (379 aa).

Residue Lys19 participates in ATP binding. The substrate site is built by Ser59, Asp146, and Asn158. ATP contacts are provided by residues 178 to 179 (TD) and 220 to 226 (TGGMATK). The region spanning 285–363 (SGDIIIDDGA…KDIISILGHD (79 aa)) is the PUA domain.

The protein belongs to the glutamate 5-kinase family.

The protein resides in the cytoplasm. It catalyses the reaction L-glutamate + ATP = L-glutamyl 5-phosphate + ADP. The protein operates within amino-acid biosynthesis; L-proline biosynthesis; L-glutamate 5-semialdehyde from L-glutamate: step 1/2. In terms of biological role, catalyzes the transfer of a phosphate group to glutamate to form L-glutamate 5-phosphate. The sequence is that of Glutamate 5-kinase from Vibrio campbellii (strain ATCC BAA-1116).